The following is a 325-amino-acid chain: All-trans-nonaprenyl-diphosphate synthase (geranyl-diphosphate specific) (325 aa).

Positions 48, 51, and 81 each coordinate isopentenyl diphosphate. Positions 88 and 92 each coordinate Mg(2+). Position 97 (arginine 97) interacts with an all-trans-polyprenyl diphosphate. Isopentenyl diphosphate is bound at residue arginine 98. An all-trans-polyprenyl diphosphate-binding residues include lysine 174, threonine 175, glutamine 211, and lysine 228.

It belongs to the FPP/GGPP synthase family. Homodimer. Mg(2+) is required as a cofactor.

It carries out the reaction 7 isopentenyl diphosphate + (2E)-geranyl diphosphate = all-trans-nonaprenyl diphosphate + 7 diphosphate. Catalyzes the sequential condensation of isopentenyl diphosphate (IPP) with the allylic substrate to give solanesyl diphosphate. Could be important to determine the side chain length of ubiquinone. The protein is All-trans-nonaprenyl-diphosphate synthase (geranyl-diphosphate specific) (sdsA) of Rhodobacter capsulatus (Rhodopseudomonas capsulata).